We begin with the raw amino-acid sequence, 311 residues long: Malate dehydrogenase (311 aa).

NAD(+) is bound at residue 10 to 15 (GAGHTG). The substrate site is built by R85 and R91. NAD(+) contacts are provided by residues N98 and 121–123 (LTN). N123 and R154 together coordinate substrate. H178 (proton acceptor) is an active-site residue.

The protein belongs to the LDH/MDH superfamily. MDH type 3 family.

It carries out the reaction (S)-malate + NAD(+) = oxaloacetate + NADH + H(+). Its function is as follows. Catalyzes the reversible oxidation of malate to oxaloacetate. The sequence is that of Malate dehydrogenase from Staphylococcus carnosus (strain TM300).